We begin with the raw amino-acid sequence, 444 residues long: Trigger factor (444 aa).

Positions 161 to 246 constitute a PPIase FKBP-type domain; sequence GDRVVIDFKG…VQKVEGQKLP (86 aa).

Belongs to the FKBP-type PPIase family. Tig subfamily.

The protein localises to the cytoplasm. The catalysed reaction is [protein]-peptidylproline (omega=180) = [protein]-peptidylproline (omega=0). Involved in protein export. Acts as a chaperone by maintaining the newly synthesized protein in an open conformation. Functions as a peptidyl-prolyl cis-trans isomerase. The polypeptide is Trigger factor (Saccharophagus degradans (strain 2-40 / ATCC 43961 / DSM 17024)).